Consider the following 297-residue polypeptide: Small ribosomal subunit biogenesis GTPase RsgA (297 aa).

The CP-type G domain maps to 65-223 (INEIGRPAVA…IADTPGFSAI (159 aa)). GTP is bound by residues 114 to 117 (SKSD) and 166 to 174 (GQSGAGKST). Residues C247, C252, H254, and C260 each contribute to the Zn(2+) site.

It belongs to the TRAFAC class YlqF/YawG GTPase family. RsgA subfamily. Monomer. Associates with 30S ribosomal subunit, binds 16S rRNA. It depends on Zn(2+) as a cofactor.

Its subcellular location is the cytoplasm. Its function is as follows. One of several proteins that assist in the late maturation steps of the functional core of the 30S ribosomal subunit. Helps release RbfA from mature subunits. May play a role in the assembly of ribosomal proteins into the subunit. Circularly permuted GTPase that catalyzes slow GTP hydrolysis, GTPase activity is stimulated by the 30S ribosomal subunit. This Lactobacillus johnsonii (strain CNCM I-12250 / La1 / NCC 533) protein is Small ribosomal subunit biogenesis GTPase RsgA.